The primary structure comprises 708 residues: Tryptophan synthase (708 aa).

Positions 1–305 are tryptophan synthase alpha chain; the sequence is MEGIKQTFQR…EADIDAQLAA (305 aa). Active-site proton acceptor residues include Glu49 and Asp60. Residues 306-708 are tryptophan synthase beta chain; that stretch reads LHGTIPKRFG…GPKIGWDLRF (403 aa). Lys392 carries the N6-(pyridoxal phosphate)lysine modification.

In the N-terminal section; belongs to the TrpA family. The protein in the C-terminal section; belongs to the TrpB family. The cofactor is pyridoxal 5'-phosphate.

The catalysed reaction is (1S,2R)-1-C-(indol-3-yl)glycerol 3-phosphate + L-serine = D-glyceraldehyde 3-phosphate + L-tryptophan + H2O. It functions in the pathway amino-acid biosynthesis; L-tryptophan biosynthesis; L-tryptophan from chorismate: step 5/5. This chain is Tryptophan synthase (trp-3), found in Neurospora crassa (strain ATCC 24698 / 74-OR23-1A / CBS 708.71 / DSM 1257 / FGSC 987).